Here is a 1357-residue protein sequence, read N- to C-terminus: DNA-directed RNA polymerase subunit beta (1357 aa).

The protein belongs to the RNA polymerase beta chain family. As to quaternary structure, the RNAP catalytic core consists of 2 alpha, 1 beta, 1 beta' and 1 omega subunit. When a sigma factor is associated with the core the holoenzyme is formed, which can initiate transcription.

The catalysed reaction is RNA(n) + a ribonucleoside 5'-triphosphate = RNA(n+1) + diphosphate. Its function is as follows. DNA-dependent RNA polymerase catalyzes the transcription of DNA into RNA using the four ribonucleoside triphosphates as substrates. This chain is DNA-directed RNA polymerase subunit beta, found in Pseudomonas syringae pv. syringae (strain B728a).